The primary structure comprises 338 residues: Malate dehydrogenase, mitochondrial (338 aa).

The N-terminal 24 residues, 1–24 (MLSALARPASAVLRRSFSTSAQNN), are a transit peptide targeting the mitochondrion. NAD(+) is bound by residues 31 to 37 (GASGGIG) and D57. S33 carries an O-linked (GlcNAc) serine glycan. An N6-acetyllysine; alternate mark is found at K78 and K91. Residues K78 and K91 each carry the N6-succinyllysine; alternate modification. The substrate site is built by R104 and R110. Residues N117 and 140–142 (IAN) contribute to the NAD(+) site. Position 142 (N142) interacts with substrate. An N6-acetyllysine modification is found at K165. R176 contacts substrate. An N6-acetyllysine; alternate modification is found at K185. Residue K185 is modified to N6-succinyllysine; alternate. H200 (proton acceptor) is an active-site residue. An N6-succinyllysine modification is found at K203. 2 positions are modified to N6-acetyllysine; alternate: K215 and K239. An N6-succinyllysine; alternate mark is found at K215 and K239. Position 239 is an N6-malonyllysine; alternate (K239). S246 carries the phosphoserine modification. Position 251 (M251) interacts with NAD(+). Position 269 is an N6-succinyllysine (K269). Residues K296, K301, K307, K314, and K324 each carry the N6-acetyllysine; alternate modification. 5 positions are modified to N6-succinyllysine; alternate: K296, K301, K307, K314, and K324. Residue K307 is modified to N6-malonyllysine; alternate. At S326 the chain carries Phosphoserine. K328, K329, and K335 each carry N6-acetyllysine; alternate. K328 is modified (N6-succinyllysine; alternate). K329 is modified (N6-malonyllysine; alternate). K335 bears the N6-succinyllysine; alternate mark.

Belongs to the LDH/MDH superfamily. MDH type 1 family. In terms of assembly, homodimer. Post-translationally, acetylation is enhanced after treatment either with trichostin A (TCA) or with nicotinamide (NAM) with the appearance of tri- and tetraacetylations. Glucose also increases acetylation.

It is found in the mitochondrion matrix. It catalyses the reaction (S)-malate + NAD(+) = oxaloacetate + NADH + H(+). With respect to regulation, enzyme activity is enhanced by acetylation. The chain is Malate dehydrogenase, mitochondrial (MDH2) from Pongo abelii (Sumatran orangutan).